The following is a 151-amino-acid chain: Multiprotein-bridging factor 1 (151 aa).

A disordered region spans residues 1-31 (MSDWESHTVIGQKARAGGSGPRANVARTQGQ). One can recognise an HTH cro/C1-type domain in the interval 85–139 (IARVRTEKKMSQKDLATKINEKPTVINDYEAGRAIPNQQVLGKMERALGVKLRGK). The segment at residues 96–115 (QKDLATKINEKPTVINDYEA) is a DNA-binding region (H-T-H motif).

The protein belongs to the MBF1 family.

In terms of biological role, transcriptional coactivator that stimulates GCN4-dependent transcriptional activity by bridging the DNA-binding region of GCN4 and TBP (SPT15), thereby recruiting TBP to GCN4-bound promoters. Involved in induction of the ribosome quality control (RQC) pathway; a pathway that degrades nascent peptide chains during problematic translation. Required to prevent stalled ribosomes from frameshifting. The sequence is that of Multiprotein-bridging factor 1 (MBF1) from Candida glabrata (strain ATCC 2001 / BCRC 20586 / JCM 3761 / NBRC 0622 / NRRL Y-65 / CBS 138) (Yeast).